Reading from the N-terminus, the 399-residue chain is Argininosuccinate synthase (399 aa).

8–16 is an ATP binding site; that stretch reads AYSGGLDTS. Tyr-87 lines the L-citrulline pocket. Gly-117 serves as a coordination point for ATP. The L-aspartate site is built by Thr-119, Asn-123, and Asp-124. Asn-123 contributes to the L-citrulline binding site. Residues Arg-127, Ser-175, Glu-260, and Tyr-272 each coordinate L-citrulline.

The protein belongs to the argininosuccinate synthase family. Type 1 subfamily. In terms of assembly, homotetramer.

The protein resides in the cytoplasm. It catalyses the reaction L-citrulline + L-aspartate + ATP = 2-(N(omega)-L-arginino)succinate + AMP + diphosphate + H(+). The protein operates within amino-acid biosynthesis; L-arginine biosynthesis; L-arginine from L-ornithine and carbamoyl phosphate: step 2/3. The sequence is that of Argininosuccinate synthase from Rhodococcus jostii (strain RHA1).